We begin with the raw amino-acid sequence, 326 residues long: Apoptosis facilitator Bcl-2-like protein 14 (326 aa).

The residue at position 44 (Ser44) is a Phosphoserine. Residues 100–147 (AEKEEDSQSSPPEICAQAQRSGVPQARPRSPKWPRSRSSMDQRLEHKA) form a disordered region. Residues 137-147 (SSMDQRLEHKA) show a composition bias toward basic and acidic residues. The BH3 signature appears at 211–225 (IVELLKYSGEQLERE). Residues 307–314 (WIQQHGGW) carry the BH2 motif.

Belongs to the Bcl-2 family. Phosphorylated by MELK, leading to inhibit its pro-apoptotic function.

Its subcellular location is the cytoplasm. Plays a role in apoptosis. The chain is Apoptosis facilitator Bcl-2-like protein 14 (BCL2L14) from Bos taurus (Bovine).